A 376-amino-acid chain; its full sequence is uncharacterized protein (376 aa).

Transmembrane regions (helical) follow at residues 153–173 and 188–208; these read QGTLIKFQQILVCLAIIVLFA and HRPFLIDFFTINAIFTVLAVY.

Its subcellular location is the membrane. This is an uncharacterized protein from Saccharomyces cerevisiae (strain ATCC 204508 / S288c) (Baker's yeast).